The sequence spans 122 residues: Large ribosomal subunit protein uL14 (122 aa).

It belongs to the universal ribosomal protein uL14 family. As to quaternary structure, part of the 50S ribosomal subunit. Forms a cluster with proteins L3 and L19. In the 70S ribosome, L14 and L19 interact and together make contacts with the 16S rRNA in bridges B5 and B8.

Its function is as follows. Binds to 23S rRNA. Forms part of two intersubunit bridges in the 70S ribosome. The polypeptide is Large ribosomal subunit protein uL14 (Desulfatibacillum aliphaticivorans).